Here is a 305-residue protein sequence, read N- to C-terminus: Methionyl-tRNA formyltransferase (305 aa).

109–112 (SLLP) contacts (6S)-5,6,7,8-tetrahydrofolate.

The protein belongs to the Fmt family.

It catalyses the reaction L-methionyl-tRNA(fMet) + (6R)-10-formyltetrahydrofolate = N-formyl-L-methionyl-tRNA(fMet) + (6S)-5,6,7,8-tetrahydrofolate + H(+). Functionally, attaches a formyl group to the free amino group of methionyl-tRNA(fMet). The formyl group appears to play a dual role in the initiator identity of N-formylmethionyl-tRNA by promoting its recognition by IF2 and preventing the misappropriation of this tRNA by the elongation apparatus. This is Methionyl-tRNA formyltransferase from Roseobacter denitrificans (strain ATCC 33942 / OCh 114) (Erythrobacter sp. (strain OCh 114)).